Reading from the N-terminus, the 481-residue chain is Cobyric acid synthase (481 aa).

In terms of domain architecture, GATase cobBQ-type spans 244-431; that stretch reads VLRVVIPVLP…LHGLFDAPEA (188 aa). The Nucleophile role is filled by Cys325. His423 is an active-site residue.

The protein belongs to the CobB/CobQ family. CobQ subfamily.

The protein operates within cofactor biosynthesis; adenosylcobalamin biosynthesis. Its function is as follows. Catalyzes amidations at positions B, D, E, and G on adenosylcobyrinic A,C-diamide. NH(2) groups are provided by glutamine, and one molecule of ATP is hydrogenolyzed for each amidation. This is Cobyric acid synthase from Ralstonia nicotianae (strain ATCC BAA-1114 / GMI1000) (Ralstonia solanacearum).